Consider the following 84-residue polypeptide: Xenoxin-1 (84 aa).

The N-terminal stretch at 1 to 18 (MRYAIVFFLVCVITLGEA) is a signal peptide. Intrachain disulfides connect cysteine 21–cysteine 42, cysteine 35–cysteine 55, cysteine 61–cysteine 76, and cysteine 77–cysteine 82.

Expressed by the skin dorsal glands.

It localises to the secreted. In terms of biological role, lacks alpha-neurotoxic activity, has apparently no antibacterial activity, nor anti-coagulant potency. The polypeptide is Xenoxin-1 (xenoxin-1) (Xenopus laevis (African clawed frog)).